A 404-amino-acid chain; its full sequence is WD repeat and SOCS box-containing protein 2 (404 aa).

WD repeat units follow at residues 105 to 148 (PPSR…LLLN), 151 to 191 (GHQD…KQIQ), 195 to 234 (GHLQ…LIRK), 237 to 276 (GHQS…RLRS), and 291 to 330 (VHMS…PVAF). Residues 356 to 404 (HVQFWTAPRVLSSLKHLCRKALRSFLTTYQVLALPIPKKMKEFLTYRTF) form the SOCS box domain.

It participates in protein modification; protein ubiquitination. Functionally, may be a substrate-recognition component of a SCF-like ECS (Elongin-Cullin-SOCS-box protein) E3 ubiquitin ligase complex which mediates the ubiquitination and subsequent proteasomal degradation of target proteins. In Mus musculus (Mouse), this protein is WD repeat and SOCS box-containing protein 2 (Wsb2).